The following is an 881-amino-acid chain: Interference hedgehog (881 aa).

The first 26 residues, 1–26 (MSSSSSSLLLMMLLLLLLLLTSKLEA), serve as a signal peptide directing secretion. Topologically, residues 27–693 (IPVLSSTSPS…NHNETYSLNP (667 aa)) are extracellular. 4 Ig-like C2-type domains span residues 37–138 (PGVR…IARL), 128–228 (PLVV…IPSS), 242–330 (PYLL…YINV), and 336–425 (PVIV…LQVN). 3 cysteine pairs are disulfide-bonded: Cys60–Cys122, Cys167–Cys212, and Cys266–Cys314. N-linked (GlcNAc...) asparagine glycosylation is found at Asn75, Asn98, Asn194, Asn201, Asn282, Asn349, Asn381, Asn430, and Asn455. The cysteines at positions 358 and 407 are disulfide-linked. 2 Fibronectin type-III domains span residues 450-558 (PPSA…LQRG) and 566-661 (VPEL…TQRS). 3 residues coordinate heparin: Arg486, Lys492, and Lys494. N-linked (GlcNAc...) asparagine glycosylation is present at Asn517. Arg532 is a heparin binding site. Asn548 carries an N-linked (GlcNAc...) asparagine glycan. The interval 655–685 (QGRTQRSKLTTTEQPIQQKGGDRNVNTTPNH) is disordered. Over residues 656 to 671 (GRTQRSKLTTTEQPIQ) the composition is skewed to polar residues. Asn686 carries an N-linked (GlcNAc...) asparagine glycan. Residues 694–714 (LLTGTIGGGALLLLLLIAFSF) form a helical membrane-spanning segment. At 715–881 (CLCRRKNRNG…SSGSLNSVGV (167 aa)) the chain is on the cytoplasmic side. Disordered stretches follow at residues 768-791 (NPLD…NSPH) and 809-881 (PTTY…SVGV). Residues 837–855 (PGSNNNLQQIGSETTTTGQ) show a composition bias toward polar residues. Over residues 865–881 (SSRSENLSSGSLNSVGV) the composition is skewed to low complexity.

The protein belongs to the immunoglobulin superfamily. IHOG family. Homodimer. Heterotetramer; 2 iHog chains bind 2 hh chains when facilitated by heparin, heparin is required to promote high-affinity interactions between hh and iHog.

The protein resides in the membrane. Its function is as follows. Mediates response to the active Hedgehog (Hh) protein signal in embryos, functioning upstream or at the level of patched (ptc). The sequence is that of Interference hedgehog from Drosophila willistoni (Fruit fly).